Reading from the N-terminus, the 230-residue chain is Sugar fermentation stimulation protein homolog (230 aa).

This sequence belongs to the SfsA family.

The chain is Sugar fermentation stimulation protein homolog from Clostridium kluyveri (strain NBRC 12016).